A 102-amino-acid polypeptide reads, in one-letter code: Trans-acting regulatory protein HvrA (102 aa).

The DNA-binding element occupies 80–85 (RGRKPK).

It belongs to the histone-like protein H-NS family. In terms of assembly, homodimer that oligomerizes on DNA into higher-order complexes that form bridges between disparate regions of DNA compacting it.

The protein resides in the cytoplasm. It is found in the nucleoid. In terms of biological role, a dim-light trans-acting activator of Puf and Puh expression, that has no effect on the expression of the Puc operon. Responsible for regulating light-harvesting-I and reaction center structural gene expression differentially from that of light-harvesting-II expression in response to alterations in light. Proper light regulation of light-harvesting and reaction center polypeptide synthesis is an important physiological trait that enables cells to adapt to ever-changing environmental conditions of light intensity. In Rhodobacter capsulatus (Rhodopseudomonas capsulata), this protein is Trans-acting regulatory protein HvrA (hvrA).